Here is a 148-residue protein sequence, read N- to C-terminus: Arginine repressor (148 aa).

Belongs to the ArgR family.

The protein localises to the cytoplasm. It functions in the pathway amino-acid biosynthesis; L-arginine biosynthesis [regulation]. In terms of biological role, regulates arginine biosynthesis genes. The protein is Arginine repressor of Koribacter versatilis (strain Ellin345).